Reading from the N-terminus, the 345-residue chain is Phosphoribosylformylglycinamidine cyclo-ligase (345 aa).

Belongs to the AIR synthase family.

It is found in the cytoplasm. It carries out the reaction 2-formamido-N(1)-(5-O-phospho-beta-D-ribosyl)acetamidine + ATP = 5-amino-1-(5-phospho-beta-D-ribosyl)imidazole + ADP + phosphate + H(+). The protein operates within purine metabolism; IMP biosynthesis via de novo pathway; 5-amino-1-(5-phospho-D-ribosyl)imidazole from N(2)-formyl-N(1)-(5-phospho-D-ribosyl)glycinamide: step 2/2. In Salmonella typhimurium (strain LT2 / SGSC1412 / ATCC 700720), this protein is Phosphoribosylformylglycinamidine cyclo-ligase.